The sequence spans 531 residues: Putative UDP-glucuronosyltransferase ugt-46 (531 aa).

An N-terminal signal peptide occupies residues 1–17 (MRLIFVLLATFVNAAFS). N-linked (GlcNAc...) asparagine glycosylation occurs at N304. The chain crosses the membrane as a helical span at residues 493-513 (VIIPVFWLSISLVIPTIFGWY).

Belongs to the UDP-glycosyltransferase family.

Its subcellular location is the membrane. The enzyme catalyses glucuronate acceptor + UDP-alpha-D-glucuronate = acceptor beta-D-glucuronoside + UDP + H(+). This chain is Putative UDP-glucuronosyltransferase ugt-46 (ugt-46), found in Caenorhabditis elegans.